The following is a 124-amino-acid chain: Small ribosomal subunit protein uS12 (124 aa).

Positions 1–22 (MATINQLVRKPRSRKVAKSDVP) are disordered. Residue Asp89 is modified to 3-methylthioaspartic acid. The interval 104–124 (TAGVNDRRQGRSKYGAKRGKS) is disordered. Residues 113 to 124 (GRSKYGAKRGKS) are compositionally biased toward basic residues.

It belongs to the universal ribosomal protein uS12 family. In terms of assembly, part of the 30S ribosomal subunit. Contacts proteins S8 and S17. May interact with IF1 in the 30S initiation complex.

With S4 and S5 plays an important role in translational accuracy. In terms of biological role, interacts with and stabilizes bases of the 16S rRNA that are involved in tRNA selection in the A site and with the mRNA backbone. Located at the interface of the 30S and 50S subunits, it traverses the body of the 30S subunit contacting proteins on the other side and probably holding the rRNA structure together. The combined cluster of proteins S8, S12 and S17 appears to hold together the shoulder and platform of the 30S subunit. The chain is Small ribosomal subunit protein uS12 from Hahella chejuensis (strain KCTC 2396).